A 254-amino-acid polypeptide reads, in one-letter code: Persulfide dioxygenase ETHE1, mitochondrial (254 aa).

The transit peptide at 1–7 directs the protein to the mitochondrion; that stretch reads MASAVVR. S14, S17, and S19 each carry phosphoserine. Position 32 is an N6-acetyllysine; alternate (K32). K32 carries the N6-succinyllysine; alternate modification. An N6-acetyllysine modification is found at K66. Fe cation contacts are provided by H79, H135, and D154. K172 is subject to N6-acetyllysine; alternate. K172 is modified (N6-succinyllysine; alternate).

It belongs to the metallo-beta-lactamase superfamily. Glyoxalase II family. In terms of assembly, homodimer. Monomer. Interacts with TST. May interact with RELA. Requires Fe(2+) as cofactor.

The protein localises to the cytoplasm. The protein resides in the nucleus. It localises to the mitochondrion matrix. It catalyses the reaction S-sulfanylglutathione + O2 + H2O = sulfite + glutathione + 2 H(+). Its function is as follows. First described as a protein that can shuttle between the nucleus and the cytoplasm and suppress p53-induced apoptosis by sequestering the transcription factor RELA/NFKB3 in the cytoplasm and preventing its accumulation in the nucleus. Sulfur dioxygenase that plays an essential role in hydrogen sulfide catabolism in the mitochondrial matrix. Hydrogen sulfide (H(2)S) is first oxidized by SQRDL, giving rise to cysteine persulfide residues. ETHE1 consumes molecular oxygen to catalyze the oxidation of the persulfide, once it has been transferred to a thiophilic acceptor, such as glutathione (R-SSH). Plays an important role in metabolic homeostasis in mitochondria by metabolizing hydrogen sulfide and preventing the accumulation of supraphysiological H(2)S levels that have toxic effects, due to the inhibition of cytochrome c oxidase. The polypeptide is Persulfide dioxygenase ETHE1, mitochondrial (Ethe1) (Mus musculus (Mouse)).